The primary structure comprises 1290 residues: 1-phosphatidylinositol 4,5-bisphosphate phosphodiesterase gamma-1 (1290 aa).

Position 2 is an N-acetylalanine (A2). The region spanning 27 to 142 (RSLEVGTVMT…WIKGLTWLME (116 aa)) is the PH 1 domain. The 36-residue stretch at 152 to 187 (QIERWLRKQFYSVDRNREDRISAKDLKNMLSQVNYR) folds into the EF-hand domain. Ca(2+) is bound by residues D165, N167, E169, R171, and D176. A PI-PLC X-box domain is found at 320-464 (DTMNNPLSHY…LKRKILIKHK (145 aa)). Catalysis depends on residues H335 and H380. Residues 489 to 523 (SIKNGILYLEDPVNHEWYPHYFVLTSSKIYYSEET) enclose the PH 2; first part domain. Y506 is modified (phosphotyrosine). The segment at 522–544 (ETSSDQGNEDEEEPKEVSSSTEL) is disordered. SH2 domains follow at residues 550-657 (WFHG…SEPV) and 668-756 (WYHA…RYPI). Position 771 is a phosphotyrosine; by SYK (Y771). Y775 carries the post-translational modification Phosphotyrosine. Y783 is subject to Phosphotyrosine; by ITK, SYK and TXK. Residues 791–851 (TFKCAVKALF…PSNYVEEMVN (61 aa)) enclose the SH3 domain. Residues 895–931 (FVFSISMASVAHWSLDVAADSQEELQDWVKKIREVAQ) enclose the PH 2; second part domain. Residues 953–1070 (LSELVVYCRP…GYVLQPSTMR (118 aa)) enclose the PI-PLC Y-box domain. Y977 is modified (phosphotyrosine). The region spanning 1071-1194 (DEAFDPFDKS…TGYRAVPLKN (124 aa)) is the C2 domain. S1221, P1222, S1227, S1233, and S1248 each carry phosphoserine. Position 1253 is a phosphotyrosine (Y1253). Residue S1263 is modified to Phosphoserine. Residues 1271–1290 (FDSRERRAPRRTRVNGDNRL) form a disordered region.

Interacts with AGAP2 via its SH3 domain. Interacts (via SH2 domain) with RET. Interacts with FLT1 (tyrosine-phosphorylated). Interacts (via SH2 domain) with FGFR1, FGFR2, FGFR3 and FGFR4 (phosphorylated). Interacts with LAT (phosphorylated) upon TCR activation. Interacts (via SH3 domain) with the Pro-rich domain of TNK1. Associates with BLNK, VAV1, GRB2 and NCK1 in a B-cell antigen receptor-dependent fashion. Interacts with CBLB in activated T-cells; which inhibits phosphorylation. Interacts with SHB. Interacts (via SH3 domain) with the Arg/Gly-rich-flanked Pro-rich domains of KHDRBS1/SAM68. This interaction is selectively regulated by arginine methylation of KHDRBS1/SAM68. Interacts with INPP5D/SHIP1, THEMIS and CLNK. Interacts with AXL, FLT4 and KIT. Interacts with RALGPS1. Interacts (via the SH2 domains) with VIL1 (phosphorylated at C-terminus tyrosine phosphorylation sites). Interacts (via SH2 domain) with PDGFRA and PDGFRB (tyrosine phosphorylated). Interacts with PIP5K1C. Interacts with NTRK1 and NTRK2 (phosphorylated upon ligand-binding). Interacts with SYK; activates PLCG1. Interacts with GRB2, LAT and THEMIS upon TCR activation in thymocytes. Interacts with TESPA1; the association is increased with prolonged stimulation of the TCR and may facilitate the assembly of the LAT signalosome. Interacts (via C-terminal proline-rich domain (PRD)) with PLCG1 (via SH3 domain); this interaction leads to guanine nucleotide exchange from PlCG1 to DNM1 and enhances DNM1-dependent endocytosis. As to quaternary structure, (Microbial infection) Interacts (via SH3 domain) with HEV ORF3 protein. The cofactor is Ca(2+). Tyrosine phosphorylated in response to signaling via activated FLT3, KIT and PDGFRA. Tyrosine phosphorylated by activated FGFR1, FGFR2, FGFR3 and FGFR4. Tyrosine phosphorylated by activated FLT1 and KDR. Tyrosine phosphorylated by activated PDGFRB. The receptor-mediated activation of PLCG1 involves its phosphorylation by tyrosine kinases, in response to ligation of a variety of growth factor receptors and immune system receptors. For instance, SYK phosphorylates and activates PLCG1 in response to ligation of the B-cell receptor. May be dephosphorylated by PTPRJ. Phosphorylated by ITK and TXK on Tyr-783 upon TCR activation in T-cells. Post-translationally, ubiquitinated by CBLB in activated T-cells.

It is found in the cell projection. It localises to the lamellipodium. The protein resides in the ruffle. The enzyme catalyses a 1,2-diacyl-sn-glycero-3-phospho-(1D-myo-inositol-4,5-bisphosphate) + H2O = 1D-myo-inositol 1,4,5-trisphosphate + a 1,2-diacyl-sn-glycerol + H(+). It catalyses the reaction a 1,2-diacyl-sn-glycero-3-phospho-(1D-myo-inositol) + H2O = 1D-myo-inositol 1-phosphate + a 1,2-diacyl-sn-glycerol + H(+). Its activity is regulated as follows. Activated by phosphorylation on tyrosine residues. Its function is as follows. Mediates the production of the second messenger molecules diacylglycerol (DAG) and inositol 1,4,5-trisphosphate (IP3). Plays an important role in the regulation of intracellular signaling cascades. Becomes activated in response to ligand-mediated activation of receptor-type tyrosine kinases, such as PDGFRA, PDGFRB, EGFR, FGFR1, FGFR2, FGFR3 and FGFR4. Plays a role in actin reorganization and cell migration. Guanine nucleotide exchange factor that binds the GTPase DNM1 and catalyzes the dissociation of GDP, allowing a GTP molecule to bind in its place, therefore enhancing DNM1-dependent endocytosis. This is 1-phosphatidylinositol 4,5-bisphosphate phosphodiesterase gamma-1 from Homo sapiens (Human).